We begin with the raw amino-acid sequence, 588 residues long: Aspartate--tRNA ligase (588 aa).

Glu-174 is an L-aspartate binding site. Residues 198–201 (QLFK) form an aspartate region. Residue Arg-220 participates in L-aspartate binding. ATP contacts are provided by residues 220 to 222 (RDE) and Gln-229. His-448 contacts L-aspartate. An ATP-binding site is contributed by Glu-482. Arg-489 is an L-aspartate binding site. Residue 534-537 (GIDR) participates in ATP binding.

The protein belongs to the class-II aminoacyl-tRNA synthetase family. Type 1 subfamily. In terms of assembly, homodimer.

It localises to the cytoplasm. It carries out the reaction tRNA(Asp) + L-aspartate + ATP = L-aspartyl-tRNA(Asp) + AMP + diphosphate. Its function is as follows. Catalyzes the attachment of L-aspartate to tRNA(Asp) in a two-step reaction: L-aspartate is first activated by ATP to form Asp-AMP and then transferred to the acceptor end of tRNA(Asp). The protein is Aspartate--tRNA ligase of Xanthomonas euvesicatoria pv. vesicatoria (strain 85-10) (Xanthomonas campestris pv. vesicatoria).